A 214-amino-acid polypeptide reads, in one-letter code: UPF0690 protein C1orf52 homolog (214 aa).

2 disordered regions span residues 1-66 (MSDE…SVSK) and 81-214 (DSRA…QCLD). Residues 32–44 (PEATASSAPAEPQ) are compositionally biased toward low complexity. Composition is skewed to basic and acidic residues over residues 49 to 61 (RAAE…DELF) and 81 to 97 (DSRA…EFKV). The span at 152 to 165 (EEEEEEQQPDSDDD) shows a compositional bias: acidic residues. The residue at position 162 (S162) is a Phosphoserine. 2 stretches are compositionally biased toward basic and acidic residues: residues 179-192 (VETF…KRDI) and 200-214 (NFVE…QCLD).

Belongs to the UPF0690 family.

In Danio rerio (Zebrafish), this protein is UPF0690 protein C1orf52 homolog.